Consider the following 344-residue polypeptide: tRNA dimethylallyltransferase (344 aa).

43–50 (GPTCCGKS) is an ATP binding site. 45–50 (TCCGKS) lines the substrate pocket. The interaction with substrate tRNA stretch occupies residues 68 to 71 (DSMQ).

Belongs to the IPP transferase family. As to quaternary structure, monomer. It depends on Mg(2+) as a cofactor.

The catalysed reaction is adenosine(37) in tRNA + dimethylallyl diphosphate = N(6)-dimethylallyladenosine(37) in tRNA + diphosphate. Its function is as follows. Catalyzes the transfer of a dimethylallyl group onto the adenine at position 37 in tRNAs that read codons beginning with uridine, leading to the formation of N6-(dimethylallyl)adenosine (i(6)A). The sequence is that of tRNA dimethylallyltransferase from Protochlamydia amoebophila (strain UWE25).